A 239-amino-acid chain; its full sequence is MLNIGLSGSTGKMGETILERIDKFKDCKIAAKFNSTNNLDDLDNFCKNSDVIIDFSTPEILEKLINYALKHNTKLVIGTTGLQPQHFKLLEKAAQTLPVLYSANMSIGANLLSYLAKEVTKILDDYDVEILETHHRNKKDSPSGTAVMLAETIASKKGLNITFNRGNRLRSEKEIGISSLRGGNVHSIHEISFLGDDEIITLKHEALNKNSFSIGAIKAAIWLQDKPSALYSMQDIYKI.

NAD(+) is bound by residues 8 to 13 (GSTGKM), 78 to 80 (GTT), and 102 to 105 (SANM). His134 serves as the catalytic Proton donor/acceptor. His135 contacts (S)-2,3,4,5-tetrahydrodipicolinate. Lys138 serves as the catalytic Proton donor. 144–145 (GT) is a (S)-2,3,4,5-tetrahydrodipicolinate binding site.

The protein belongs to the DapB family.

It is found in the cytoplasm. The catalysed reaction is (S)-2,3,4,5-tetrahydrodipicolinate + NAD(+) + H2O = (2S,4S)-4-hydroxy-2,3,4,5-tetrahydrodipicolinate + NADH + H(+). It catalyses the reaction (S)-2,3,4,5-tetrahydrodipicolinate + NADP(+) + H2O = (2S,4S)-4-hydroxy-2,3,4,5-tetrahydrodipicolinate + NADPH + H(+). The protein operates within amino-acid biosynthesis; L-lysine biosynthesis via DAP pathway; (S)-tetrahydrodipicolinate from L-aspartate: step 4/4. Functionally, catalyzes the conversion of 4-hydroxy-tetrahydrodipicolinate (HTPA) to tetrahydrodipicolinate. This chain is 4-hydroxy-tetrahydrodipicolinate reductase, found in Rickettsia peacockii (strain Rustic).